The chain runs to 179 residues: Large ribosomal subunit protein uL5 (179 aa).

It belongs to the universal ribosomal protein uL5 family. As to quaternary structure, part of the 50S ribosomal subunit; part of the 5S rRNA/L5/L18/L25 subcomplex. Contacts the 5S rRNA and the P site tRNA. Forms a bridge to the 30S subunit in the 70S ribosome.

Functionally, this is one of the proteins that bind and probably mediate the attachment of the 5S RNA into the large ribosomal subunit, where it forms part of the central protuberance. In the 70S ribosome it contacts protein S13 of the 30S subunit (bridge B1b), connecting the 2 subunits; this bridge is implicated in subunit movement. Contacts the P site tRNA; the 5S rRNA and some of its associated proteins might help stabilize positioning of ribosome-bound tRNAs. In Yersinia enterocolitica serotype O:8 / biotype 1B (strain NCTC 13174 / 8081), this protein is Large ribosomal subunit protein uL5.